The following is a 194-amino-acid chain: Lipoprotein signal peptidase (194 aa).

2 helical membrane-spanning segments follow: residues 75 to 95 and 97 to 117; these read TIFL…MICS and TIGS…NLID. Residues aspartate 126 and aspartate 144 contribute to the active site. A helical membrane pass occupies residues 135-155; that stretch reads YSFPVFNLADCFITLGVIILM.

The protein belongs to the peptidase A8 family.

It localises to the cell inner membrane. The catalysed reaction is Release of signal peptides from bacterial membrane prolipoproteins. Hydrolyzes -Xaa-Yaa-Zaa-|-(S,diacylglyceryl)Cys-, in which Xaa is hydrophobic (preferably Leu), and Yaa (Ala or Ser) and Zaa (Gly or Ala) have small, neutral side chains.. The protein operates within protein modification; lipoprotein biosynthesis (signal peptide cleavage). In terms of biological role, this protein specifically catalyzes the removal of signal peptides from prolipoproteins. This Rickettsia prowazekii (strain Madrid E) protein is Lipoprotein signal peptidase.